The sequence spans 209 residues: uncharacterized protein (209 aa).

Positions 177-209 (DNSDNSSDSDDSDSLDGSDDLNDSDNVDNLFVG) are disordered. A compositionally biased stretch (acidic residues) spans 183 to 202 (SDSDDSDSLDGSDDLNDSDN).

This is an uncharacterized protein from Acanthamoeba polyphaga (Amoeba).